A 233-amino-acid polypeptide reads, in one-letter code: Uracil-DNA glycosylase (233 aa).

The active-site Proton acceptor is Asp70.

It belongs to the uracil-DNA glycosylase (UDG) superfamily. UNG family.

Its subcellular location is the cytoplasm. It carries out the reaction Hydrolyzes single-stranded DNA or mismatched double-stranded DNA and polynucleotides, releasing free uracil.. Excises uracil residues from the DNA which can arise as a result of misincorporation of dUMP residues by DNA polymerase or due to deamination of cytosine. The polypeptide is Uracil-DNA glycosylase (Helicobacter pylori (strain HPAG1)).